Here is a 195-residue protein sequence, read N- to C-terminus: Lipid A acyltransferase PagP (195 aa).

The N-terminal stretch at 1-30 is a signal peptide; the sequence is MRLTLTSRSRLFVLSSLLFISTFDVLSAQA. Residues histidine 67, aspartate 110, and serine 111 contribute to the active site.

The protein belongs to the lipid A palmitoyltransferase family. As to quaternary structure, homodimer.

It localises to the cell outer membrane. The catalysed reaction is a lipid A + a 1,2-diacyl-sn-glycero-3-phosphocholine = a hepta-acyl lipid A + a 2-acyl-sn-glycero-3-phosphocholine. It carries out the reaction a lipid IVA + a 1,2-diacyl-sn-glycero-3-phosphocholine = a lipid IVB + a 2-acyl-sn-glycero-3-phosphocholine. The enzyme catalyses a lipid IIA + a 1,2-diacyl-sn-glycero-3-phosphocholine = a lipid IIB + a 2-acyl-sn-glycero-3-phosphocholine. Its function is as follows. Transfers a fatty acid residue from the sn-1 position of a phospholipid to the N-linked hydroxyfatty acid chain on the proximal unit of lipid A or its precursors. This is Lipid A acyltransferase PagP from Dickeya chrysanthemi (strain Ech1591) (Dickeya zeae (strain Ech1591)).